The following is a 640-amino-acid chain: MGKIIGIDLGTTNSCVALMEGNKPRVIENAEGDRTTPSVVAFTKEGETLVGQSAKRQAITNPQNTLYAIKRLIGRRFDEEVVQRDIKMVPYKIVKADNGDAWVEATGKKMAPPEVSANVLRKMKKTAEDYLGEEVEAAVITVPAYFNDSQRQATKDAGRIAGLEVKRIINEPTAAALAYGLDKKRGDQKIAVYDLGGGTFDVSIIEIAEVEGEHQFEVLSTNGDTFLGGEDFDKRIIDYIAEEFKKEQSIDLRGDPLAMQRLKDAAEKAKIELSSSQQTEVNLPYVTADASGPKHLNVRITRAKLESLVEDLINRTIGPCKTALQDAKLSASDIDEVILVGGQTRMPKVQEAAKEFFGKEPRKDVNPDEAVAVGAAIQAGVLGGEVKEVLLLDVTPLSLGIETLGGVMTKLIEKNTTIPTRKTQVFSTAEDNQTAVTVHVLQGEREQAVGNKSLGRFDLVGIPPAHRGMPQIEVTFDIDANGILNVSAKDKATGKEQSIVIKASSGLAEGEIERMVSDAEAHVEEDRKFRELVDLRNQGDNLIHATEKSMEELGDKLEANEKSEIEKTIGELKTAMKEDNKEVIEARIKDLTDASAKMAERLYTQQAEEPQPQKEEGKAAEEDVVDAEFEEVKEDKNKAS.

Threonine 199 is subject to Phosphothreonine; by autocatalysis. Residues 603-640 (YTQQAEEPQPQKEEGKAAEEDVVDAEFEEVKEDKNKAS) form a disordered region. A compositionally biased stretch (basic and acidic residues) spans 611 to 621 (QPQKEEGKAAE). Positions 622 to 632 (EDVVDAEFEEV) are enriched in acidic residues.

It belongs to the heat shock protein 70 family.

In terms of biological role, acts as a chaperone. The protein is Chaperone protein DnaK of Nitrosococcus oceani (strain ATCC 19707 / BCRC 17464 / JCM 30415 / NCIMB 11848 / C-107).